We begin with the raw amino-acid sequence, 123 residues long: Small ribosomal subunit protein uS12 (123 aa).

3-methylthioaspartic acid is present on Asp89.

Belongs to the universal ribosomal protein uS12 family. As to quaternary structure, part of the 30S ribosomal subunit. Contacts proteins S8 and S17. May interact with IF1 in the 30S initiation complex.

Its function is as follows. With S4 and S5 plays an important role in translational accuracy. Functionally, interacts with and stabilizes bases of the 16S rRNA that are involved in tRNA selection in the A site and with the mRNA backbone. Located at the interface of the 30S and 50S subunits, it traverses the body of the 30S subunit contacting proteins on the other side and probably holding the rRNA structure together. The combined cluster of proteins S8, S12 and S17 appears to hold together the shoulder and platform of the 30S subunit. In Acidiphilium cryptum (strain JF-5), this protein is Small ribosomal subunit protein uS12.